We begin with the raw amino-acid sequence, 94 residues long: RxLR effector protein PITG_15972 (94 aa).

Positions 1–21 (MRAVYILAMACAATLQASSSA) are cleaved as a signal peptide. The short motif at 50-65 (RLLRVEDKEEETEEER) is the RxLR-dEER element.

The protein belongs to the RxLR effector family.

It localises to the secreted. Its subcellular location is the host cytoplasm. The protein resides in the host nucleus. Its function is as follows. Effector that enhances P.infestans colonization of Nicotiana benthamiana leaves. The chain is RxLR effector protein PITG_15972 from Phytophthora infestans (strain T30-4) (Potato late blight agent).